Reading from the N-terminus, the 210-residue chain is MNSKFIVIEGLEGAGKTTAREAVVSELQRHGINDIIFTREPGGTPLAEKLRELIKQGVEGERVTDSAELLMLYAARVQLVENVIKPALARGAWVVGDRHDLSSQAYQGGGRGMDAGLMNSLKQAVLGDFAPDLTLYLDVTPQIGLQRARARGELDRIEQESLNFFTRTRERYLALASADSRIKTVDATRPLEQVTAALQQTLTQWLQEQR.

Gly-10–Thr-17 lines the ATP pocket.

Belongs to the thymidylate kinase family.

It carries out the reaction dTMP + ATP = dTDP + ADP. In terms of biological role, phosphorylation of dTMP to form dTDP in both de novo and salvage pathways of dTTP synthesis. In Erwinia tasmaniensis (strain DSM 17950 / CFBP 7177 / CIP 109463 / NCPPB 4357 / Et1/99), this protein is Thymidylate kinase.